A 599-amino-acid chain; its full sequence is Elongation factor 4 (599 aa).

The tr-type G domain occupies 2–184; the sequence is KNIRNFSIIA…RLVRDIPPPE (183 aa). Residues 14–19 and 131–134 contribute to the GTP site; these read DHGKST and NKID.

It belongs to the TRAFAC class translation factor GTPase superfamily. Classic translation factor GTPase family. LepA subfamily.

It localises to the cell inner membrane. It carries out the reaction GTP + H2O = GDP + phosphate + H(+). Functionally, required for accurate and efficient protein synthesis under certain stress conditions. May act as a fidelity factor of the translation reaction, by catalyzing a one-codon backward translocation of tRNAs on improperly translocated ribosomes. Back-translocation proceeds from a post-translocation (POST) complex to a pre-translocation (PRE) complex, thus giving elongation factor G a second chance to translocate the tRNAs correctly. Binds to ribosomes in a GTP-dependent manner. This Sodalis glossinidius (strain morsitans) protein is Elongation factor 4.